The following is a 354-amino-acid chain: Probable DNA repair protein RAD51 homolog 4 (354 aa).

115–122 is a binding site for ATP; it reads GNTSCGKT.

It belongs to the RecA family. RAD51 subfamily.

Its subcellular location is the nucleus. Involved in the homologous recombination repair (HRR) pathway of double-stranded DNA breaks arising during DNA replication or induced by DNA-damaging agents. The chain is Probable DNA repair protein RAD51 homolog 4 (rad51d) from Dictyostelium discoideum (Social amoeba).